A 297-amino-acid polypeptide reads, in one-letter code: Nucleotide-binding protein BURPS668_0577 (297 aa).

8–15 (GISGSGKS) lines the ATP pocket. 57–60 (DARS) lines the GTP pocket.

Belongs to the RapZ-like family.

Its function is as follows. Displays ATPase and GTPase activities. This chain is Nucleotide-binding protein BURPS668_0577, found in Burkholderia pseudomallei (strain 668).